We begin with the raw amino-acid sequence, 2594 residues long: Protein sevenless (2594 aa).

2 disordered regions span residues 1 to 34 (MFWREDAAQQQQQQQQQQQQQQQQQQPPHPPKRL) and 49 to 92 (KMST…RVRR). Residues 1–2141 (MFWREDAAQQ…FVSPEKRGSL (2141 aa)) are Extracellular-facing. The span at 9-26 (QQQQQQQQQQQQQQQQQQ) shows a compositional bias: low complexity. N-linked (GlcNAc...) asparagine glycans are attached at residues Asn77, Asn401, Asn508, Asn532, Asn641, Asn667, Asn778, Asn797, Asn874, and Asn980. Fibronectin type-III domains are found at residues 358–462 (ETTQ…TPME) and 468–560 (APII…SPLE). Residues 838 to 938 (PPAPRELRAL…APLATRTWPL (101 aa)) form the Fibronectin type-III 3 domain. Residues 1024–1066 (GLLYWTDLARDCVQRLDPFSGERELLPIFGARHLALDSAQGHL) form an LDL-receptor class B repeat. Fibronectin type-III domains are found at residues 1227-1317 (LAVP…QLDT) and 1324-1430 (QPRR…VQSV). Asn1257, Asn1344, Asn1382, Asn1577, Asn1587, Asn1665, Asn1752, Asn1776, Asn1824, Asn1908, Asn1966, and Asn2088 each carry an N-linked (GlcNAc...) asparagine glycan. 4 consecutive Fibronectin type-III domains span residues 1711 to 1814 (TAAA…TLHT), 1821 to 1920 (APRN…SYAP), 1922 to 2010 (PPLQ…TLGD), and 2014 to 2132 (APGR…AEPF). A helical transmembrane segment spans residues 2142–2162 (VLAIIAPAAIVSSCVLALVLV). Residues 2163–2594 (RKLQKRRHRA…LYANEGISGL (432 aa)) lie on the Cytoplasmic side of the membrane. The region spanning 2224-2495 (LTLLRFLGSG…KRCLSTLQAL (272 aa)) is the Protein kinase domain. Residues 2230 to 2238 (LGSGAFGEV) and Lys2257 contribute to the ATP site. Asp2355 serves as the catalytic Proton acceptor. Tyr2391 is modified (phosphotyrosine; by autocatalysis). Residues 2543–2568 (TVSTTDADTTGSPTTPTAPTTPTTTT) form a disordered region. Residues 2545–2568 (STTDADTTGSPTTPTAPTTPTTTT) are compositionally biased toward low complexity.

It belongs to the protein kinase superfamily. Tyr protein kinase family. Insulin receptor subfamily.

Its subcellular location is the cell membrane. It catalyses the reaction L-tyrosyl-[protein] + ATP = O-phospho-L-tyrosyl-[protein] + ADP + H(+). In terms of biological role, receptor for an extracellular signal required to instruct a cell to differentiate into a R7 photoreceptor. The ligand for Sev is the Boss (Bride of Sevenless) protein. The chain is Protein sevenless (sev) from Drosophila virilis (Fruit fly).